The sequence spans 129 residues: Prefoldin subunit 4 (129 aa).

Residue Met-1 is modified to N-acetylmethionine.

Belongs to the prefoldin subunit beta family. In terms of assembly, heterohexamer of two PFD-alpha type and four PFD-beta type subunits.

Functionally, binds specifically to cytosolic chaperonin (c-CPN) and transfers target proteins to it. Binds to nascent polypeptide chain and promotes folding in an environment in which there are many competing pathways for nonnative proteins. The sequence is that of Prefoldin subunit 4 (GIM3) from Saccharomyces cerevisiae (strain ATCC 204508 / S288c) (Baker's yeast).